The chain runs to 508 residues: Glycogen synthase (508 aa).

Residue lysine 15 participates in ADP-alpha-D-glucose binding. Positions 483–508 are disordered; the sequence is ARNRAETRPQTASALSYREPRPAAEY.

It belongs to the glycosyltransferase 1 family. Bacterial/plant glycogen synthase subfamily.

The enzyme catalyses [(1-&gt;4)-alpha-D-glucosyl](n) + ADP-alpha-D-glucose = [(1-&gt;4)-alpha-D-glucosyl](n+1) + ADP + H(+). It functions in the pathway glycan biosynthesis; glycogen biosynthesis. In terms of biological role, synthesizes alpha-1,4-glucan chains using ADP-glucose. This chain is Glycogen synthase, found in Paracidovorax citrulli (strain AAC00-1) (Acidovorax citrulli).